Here is a 343-residue protein sequence, read N- to C-terminus: Phosphoribosylformylglycinamidine cyclo-ligase (343 aa).

It belongs to the AIR synthase family.

Its subcellular location is the cytoplasm. It carries out the reaction 2-formamido-N(1)-(5-O-phospho-beta-D-ribosyl)acetamidine + ATP = 5-amino-1-(5-phospho-beta-D-ribosyl)imidazole + ADP + phosphate + H(+). It participates in purine metabolism; IMP biosynthesis via de novo pathway; 5-amino-1-(5-phospho-D-ribosyl)imidazole from N(2)-formyl-N(1)-(5-phospho-D-ribosyl)glycinamide: step 2/2. This Parasynechococcus marenigrum (strain WH8102) protein is Phosphoribosylformylglycinamidine cyclo-ligase.